A 188-amino-acid chain; its full sequence is Proline-rich protein 3 (188 aa).

The interval methionine 1 to aspartate 157 is disordered. Pro residues-rich tracts occupy residues isoleucine 35–methionine 46 and leucine 69–glycine 82. Over residues arginine 83–proline 96 the composition is skewed to low complexity. The segment covering proline 145–aspartate 157 has biased composition (basic and acidic residues). A C3H1-type zinc finger spans residues lysine 155–valine 183.

The polypeptide is Proline-rich protein 3 (PRR3) (Homo sapiens (Human)).